Consider the following 2131-residue polypeptide: Beta/gamma crystallin domain-containing protein 1 (2131 aa).

Disordered regions lie at residues 1 to 53 (MPLS…LPAP), 104 to 370 (KSRA…KGHA), 385 to 674 (TEGA…PVHK), 688 to 707 (RTNSSPRHTDIRGQRNTPAS), and 723 to 743 (AKEMEQPEKKVMPNSPQNGVL). The span at 19 to 35 (PPKKHTTFHLWRSKKKQ) shows a compositional bias: basic residues. The segment covering 135-147 (RNGLESPTRSNAK) has biased composition (polar residues). Basic and acidic residues-rich tracts occupy residues 160–169 (LPERESERSR) and 184–194 (GSPRENPREAE). The segment covering 248-265 (ATTTAKQLHSSPGNSSRQ) has biased composition (polar residues). Basic residues predominate over residues 414–424 (SGRRSGRRRGS). The span at 479–490 (ASAASPESKPSP) shows a compositional bias: low complexity. A phosphoserine mark is found at S483 and S489. Basic and acidic residues-rich tracts occupy residues 536–546 (PAKESPPKRVP) and 562–572 (EAARAIPRELP). Low complexity predominate over residues 609–619 (RAAGAPGASDA). Positions 723–733 (AKEMEQPEKKV) are enriched in basic and acidic residues. A phosphoserine mark is found at S737 and S756. 2 disordered regions span residues 758 to 791 (EEILPATRGMNGDSSENQALGPQPNQDDKADVQT) and 837 to 889 (DIPT…KDTC). The span at 769–782 (GDSSENQALGPQPN) shows a compositional bias: polar residues. Over residues 864–881 (SPAESSPGPSLSLSAPAP) the composition is skewed to low complexity. S892 bears the Phosphoserine mark. Disordered stretches follow at residues 926 to 947 (LELGGETTPPLSTERSPEAVGS), 1041 to 1101 (QAQS…VFDS), 1271 to 1302 (STSQNGSLSQSSVSQPTTEGAPPCGLNKEQSN), and 1316 to 1348 (SSSTSHSSLKSPSHMEKYPQKEKTKEDLDSRSN). Residue T933 is modified to Phosphothreonine. Residues 1055–1089 (SSPTNSPSSGNHLATPQRPDQTVTNGQDSPASLLN) show a composition bias toward polar residues. 3 stretches are compositionally biased toward low complexity: residues 1091–1101 (SAGSDDSVFDS), 1271–1288 (STSQNGSLSQSSVSQPTT), and 1316–1327 (SSSTSHSSLKSP). Over residues 1328–1348 (SHMEKYPQKEKTKEDLDSRSN) the composition is skewed to basic and acidic residues. 12 Beta/gamma crystallin 'Greek key' domains span residues 1430-1469 (GKVVIYSEPDVSEKCIEVFSDIQDCSSWSLSPVILIKVVR), 1470-1525 (GCWI…RHVV), 1531-1571 (SHID…KVHW), 1572-1614 (GTWL…RPLK), 1626-1678 (PKVV…KVLR), 1679-1721 (GIWV…RPIL), 1727-1769 (AHMI…NVLS), 1770-1812 (GVWV…QPIC), 1823-1860 (NQIHLFSEPQFQGHSQSFEETTSQIDDSFSTKSCRVSG), 1861-1904 (GSWV…RFID), 1910-1950 (PTII…QVIG), and 1951-1992 (GIWV…RPFV). The Ricin B-type lectin domain maps to 1994–2127 (KRIYFRLRNK…EKFTQVWEAM (134 aa)).

Belongs to the beta/gamma-crystallin family.

Its function is as follows. May function as suppressor of malignant melanoma. It may exert its effects through interactions with the cytoskeleton. The protein is Beta/gamma crystallin domain-containing protein 1 of Homo sapiens (Human).